We begin with the raw amino-acid sequence, 223 residues long: Holliday junction branch migration complex subunit RuvA (223 aa).

Residues 1–64 (MIGRIAGVIL…EDLLQLFGFP (64 aa)) form a domain I region. A domain II region spans residues 65–143 (TLLEKEWHRL…AVMALGGALT (79 aa)). The segment at 144–169 (VDPGPLPEVELVEAAVPAPVPAKAAP) is flexible linker. Positions 170 to 223 (SSAQATADALSALGNLGYAPSEAASAVAEAAAREPAAPTAALIRAALRLLAPKE) are domain III.

Belongs to the RuvA family. As to quaternary structure, homotetramer. Forms an RuvA(8)-RuvB(12)-Holliday junction (HJ) complex. HJ DNA is sandwiched between 2 RuvA tetramers; dsDNA enters through RuvA and exits via RuvB. An RuvB hexamer assembles on each DNA strand where it exits the tetramer. Each RuvB hexamer is contacted by two RuvA subunits (via domain III) on 2 adjacent RuvB subunits; this complex drives branch migration. In the full resolvosome a probable DNA-RuvA(4)-RuvB(12)-RuvC(2) complex forms which resolves the HJ.

The protein resides in the cytoplasm. Its function is as follows. The RuvA-RuvB-RuvC complex processes Holliday junction (HJ) DNA during genetic recombination and DNA repair, while the RuvA-RuvB complex plays an important role in the rescue of blocked DNA replication forks via replication fork reversal (RFR). RuvA specifically binds to HJ cruciform DNA, conferring on it an open structure. The RuvB hexamer acts as an ATP-dependent pump, pulling dsDNA into and through the RuvAB complex. HJ branch migration allows RuvC to scan DNA until it finds its consensus sequence, where it cleaves and resolves the cruciform DNA. The polypeptide is Holliday junction branch migration complex subunit RuvA (Paracoccus denitrificans (strain Pd 1222)).